Consider the following 312-residue polypeptide: Thioredoxin reductase (312 aa).

Position 33-43 (E33–Q43) interacts with FAD. An intrachain disulfide couples C138 to C141. D283–A292 is an FAD binding site.

This sequence belongs to the class-II pyridine nucleotide-disulfide oxidoreductase family. As to quaternary structure, homodimer. FAD is required as a cofactor.

The protein resides in the cytoplasm. It carries out the reaction [thioredoxin]-dithiol + NADP(+) = [thioredoxin]-disulfide + NADPH + H(+). In Chlamydia trachomatis serovar D (strain ATCC VR-885 / DSM 19411 / UW-3/Cx), this protein is Thioredoxin reductase (trxB).